A 318-amino-acid polypeptide reads, in one-letter code: uncharacterized protein (318 aa).

The protein belongs to the asfivirus F317L family.

It is found in the virion. This is an uncharacterized protein from African swine fever virus (isolate Tick/Malawi/Lil 20-1/1983) (ASFV).